The chain runs to 717 residues: Coupling protein TraD (717 aa).

Over 1 to 27 (MSFNAKDMTQGGQIASMRIRMFSQIAN) the chain is Cytoplasmic. A helical transmembrane segment spans residues 28-47 (IMLYCLFIFFWILVGLVLWI). The Periplasmic portion of the chain corresponds to 48–104 (KISWQTFVNGCIYWWCTTLEGMRDLIKSQPVYEIQYYGKTFRMNAAQVLHDKYMIWC). A helical membrane pass occupies residues 105-130 (SEQLWSAFVLAAVVALVICLITFFVV). Residues 131-717 (SWILGRQGKQ…GEDVEPGDDF (587 aa)) are Cytoplasmic-facing. 192 to 199 (GTVGAGKS) contacts ATP. 2 disordered regions span residues 614 to 639 (EDVTQAEQPQQPVSPAINDKKSDSGV) and 650 to 669 (LKMKPEEEMEQQLPPGISES).

Belongs to the TrwB coupling protein family. Interacts with relaxosome component TraM. May form a hexamer in the membrane.

It localises to the cell inner membrane. Its function is as follows. Conjugative DNA transfer (CDT) is the unidirectional transfer of ssDNA plasmid from a donor to a recipient cell. It is the central mechanism by which antibiotic resistance and virulence factors are propagated in bacterial populations. Couples the transferosome to a type IV secretion system. Probably forms a pore through which single-stranded plasmid DNA is transferred to the secretion system. The last 37 residues are important for determining plasmid specificity and transfer efficiency, with additional specificity conferred by the TraD-TraM pair. In Escherichia coli (strain K12), this protein is Coupling protein TraD (traD).